Reading from the N-terminus, the 77-residue chain is Translation initiation factor IF-1, chloroplastic (77 aa).

Residues 1 to 71 (MKEQKWIHEG…TRGRIIYRLR (71 aa)) enclose the S1-like domain.

The protein belongs to the IF-1 family. Component of the 30S ribosomal translation pre-initiation complex which assembles on the 30S ribosome in the order IF-2 and IF-3, IF-1 and N-formylmethionyl-tRNA(fMet); mRNA recruitment can occur at any time during PIC assembly.

It localises to the plastid. Its subcellular location is the chloroplast. Functionally, one of the essential components for the initiation of protein synthesis. Stabilizes the binding of IF-2 and IF-3 on the 30S subunit to which N-formylmethionyl-tRNA(fMet) subsequently binds. Helps modulate mRNA selection, yielding the 30S pre-initiation complex (PIC). Upon addition of the 50S ribosomal subunit IF-1, IF-2 and IF-3 are released leaving the mature 70S translation initiation complex. The chain is Translation initiation factor IF-1, chloroplastic from Lactuca sativa (Garden lettuce).